The sequence spans 683 residues: Long-chain-fatty-acid--CoA ligase 5 (683 aa).

Residues L12–I32 traverse the membrane as a helical; Signal-anchor for type III membrane protein segment. The Cytoplasmic portion of the chain corresponds to N33–E683. K361 bears the N6-acetyllysine mark.

This sequence belongs to the ATP-dependent AMP-binding enzyme family. In terms of tissue distribution, expressed most abundantly in the small intestine, and to a much lesser extent in the lung, liver, adrenal gland, adipose tissue and kidney.

Its subcellular location is the mitochondrion. It is found in the endoplasmic reticulum. The protein resides in the mitochondrion outer membrane. It localises to the endoplasmic reticulum membrane. The protein localises to the cell membrane. The enzyme catalyses a long-chain fatty acid + ATP + CoA = a long-chain fatty acyl-CoA + AMP + diphosphate. It carries out the reaction (5Z,8Z,11Z,14Z)-eicosatetraenoate + ATP + CoA = (5Z,8Z,11Z,14Z)-eicosatetraenoyl-CoA + AMP + diphosphate. It catalyses the reaction 15-hydroxy-(5Z,8Z,11Z,13E)-eicosatetraenoate + ATP + CoA = 15-hydroxy-(5Z,8Z,11Z,13E)-eicosatetraenoyl-CoA + AMP + diphosphate. The catalysed reaction is 12-hydroxy-(5Z,8Z,10E,14Z)-eicosatetraenoate + ATP + CoA = 12-hydroxy-(5Z,8Z,10E,14Z)-eicosatetraenoyl-CoA + AMP + diphosphate. The enzyme catalyses 5-hydroxy-(6E,8Z,11Z,14Z)-eicosatetraenoate + ATP + CoA = 5-hydroxy-(6E,8Z,11Z,14Z)-eicosatetraenoyl-CoA + AMP + diphosphate. It carries out the reaction 14,15-epoxy-(5Z,8Z,11Z)-eicosatrienoate + ATP + CoA = 14,15-epoxy-(5Z,8Z,11Z)-eicosatrienoyl-CoA + AMP + diphosphate. It catalyses the reaction 11,12-epoxy-(5Z,8Z,14Z)-eicosatrienoate + ATP + CoA = 11,12-epoxy-(5Z,8Z,14Z)-eicosatrienoyl-CoA + AMP + diphosphate. The catalysed reaction is hexadecanoate + ATP + CoA = hexadecanoyl-CoA + AMP + diphosphate. The enzyme catalyses (E)-hexadec-2-enoate + ATP + CoA = (2E)-hexadecenoyl-CoA + AMP + diphosphate. It carries out the reaction (9Z)-octadecenoate + ATP + CoA = (9Z)-octadecenoyl-CoA + AMP + diphosphate. In terms of biological role, catalyzes the conversion of long-chain fatty acids to their active form acyl-CoAs for both synthesis of cellular lipids, and degradation via beta-oxidation. ACSL5 may sensitize epithelial cells to apoptosis specifically triggered by the death ligand TRAIL at the villus tip of the crypt-villus axis of the small intestine. May have a role in the survival of glioma cells. May activate fatty acids from exogenous sources for the synthesis of triacylglycerol destined for intracellular storage. It was suggested that it may also stimulate fatty acid oxidation. Utilizes a wide range of saturated fatty acids with a preference for C16-C18 unsaturated fatty acids. The chain is Long-chain-fatty-acid--CoA ligase 5 from Rattus norvegicus (Rat).